Consider the following 722-residue polypeptide: Host cell factor 2 (722 aa).

Kelch repeat units lie at residues 34–79, 83–130, 207–255, and 257–303; these read LMII…GFVC, RILV…RLGH, KMYV…VIGN, and MYIF…VSDS. 3 Fibronectin type-III domains span residues 359-460, 514-604, and 606-716; these read APSQ…VDSS, TPSN…TCTP, and FPGA…DQEK. A disordered region spans residues 398–476; sequence ATSSDSSAAP…LAPNTSNNSS (79 aa). Polar residues predominate over residues 419-436; sequence QGSNSTLHNSVSDTVNST.

In terms of assembly, binds KMT2A/MLL1. Component of the MLL1/MLL complex, at least composed of KMT2A/MLL1, ASH2L, RBBP5, DPY30, WDR5, MEN1, HCFC1 and HCFC2. Interacts with TASOR. Expressed in the spermatogonia, spermatocytes and ovary.

Its subcellular location is the cytoplasm. The protein localises to the nucleus. This chain is Host cell factor 2 (Hcfc2), found in Mus musculus (Mouse).